A 79-amino-acid chain; its full sequence is MQVLVRDNNVDQALKALKKKMQREGIFREMKLRGYYEKPSEKRAREKAEAVRRARKLARKKMQREGLLPMKPKPMPGMR.

The segment at 58-79 (ARKKMQREGLLPMKPKPMPGMR) is disordered.

This sequence belongs to the bacterial ribosomal protein bS21 family.

The chain is Small ribosomal subunit protein bS21 from Beijerinckia indica subsp. indica (strain ATCC 9039 / DSM 1715 / NCIMB 8712).